Consider the following 55-residue polypeptide: ATP synthase protein 8 (55 aa).

A helical membrane pass occupies residues 6 to 26 (PHPWFAILVFSWIFFLVILPK).

This sequence belongs to the ATPase protein 8 family. In terms of assembly, F-type ATPases have 2 components, CF(1) - the catalytic core - and CF(0) - the membrane proton channel.

The protein resides in the mitochondrion membrane. Mitochondrial membrane ATP synthase (F(1)F(0) ATP synthase or Complex V) produces ATP from ADP in the presence of a proton gradient across the membrane which is generated by electron transport complexes of the respiratory chain. F-type ATPases consist of two structural domains, F(1) - containing the extramembraneous catalytic core and F(0) - containing the membrane proton channel, linked together by a central stalk and a peripheral stalk. During catalysis, ATP synthesis in the catalytic domain of F(1) is coupled via a rotary mechanism of the central stalk subunits to proton translocation. Part of the complex F(0) domain. Minor subunit located with subunit a in the membrane. This chain is ATP synthase protein 8 (MT-ATP8), found in Squalus acanthias (Spiny dogfish).